We begin with the raw amino-acid sequence, 652 residues long: Forkhead box protein O1 (652 aa).

Disordered regions lie at residues 1 to 62 (MAEA…ASAS) and 112 to 154 (VHPA…SSRR). Thr-24 carries the post-translational modification Phosphothreonine; by PKB/AKT1 or PKB/AKT2 and SGK1. A compositionally biased stretch (low complexity) spans 35–62 (SNSTTSSPAPSGGAAANPDAAASLASAS). A compositionally biased stretch (pro residues) spans 114 to 133 (PAPPQPPPTGPLSQPPPVPP). Over residues 134–146 (SAAAAAGPLAGQP) the composition is skewed to low complexity. Residues 156-232 (AWGNLSYADL…VQNEGTGKSS (77 aa)) constitute a DNA-binding region (fork-head). DNA-binding stretches follow at residues 208–215 (NSIRHNLS) and 231–234 (SSWW). A Phosphoserine; by STK4/MST1 modification is found at Ser-209. Ser-215, Ser-231, and Ser-232 each carry phosphoserine. Disordered regions lie at residues 231-342 (SSWW…DVHS) and 383-410 (SLTVSTQSSPGSMMQQTPCYSFAPPNTS). N6-acetyllysine is present on residues Lys-242 and Lys-245. Position 246 is a phosphoserine; by CDK1 (Ser-246). An omega-N-methylarginine; by PRMT1 mark is found at Arg-248 and Arg-250. The Nuclear localization signal signature appears at 248 to 250 (RRR). Ser-253 carries the phosphoserine; by PKB/AKT1 and SGK1 modification. An N6-acetyllysine mark is found at Lys-259, Lys-262, and Lys-271. Basic residues predominate over residues 261–272 (AKSRGRAAKKKA). The tract at residues 280–562 (GPGDSPGSQF…TPVKTPLQVP (283 aa)) is sufficient for interaction with NLK. Ser-284 and Ser-295 each carry phosphoserine. Residues 306–323 (NWSTFRPRTSSNASTISG) show a composition bias toward polar residues. Residue Ser-316 is modified to Phosphoserine; by PKB/AKT1 or PKB/AKT2. Ser-319 bears the Phosphoserine; by CK1 and SGK1 mark. At Ser-322 the chain carries Phosphoserine; by CK1. Residue Ser-326 is modified to Phosphoserine. A Phosphothreonine modification is found at Thr-330. Residues 360 to 456 (SEISNPENME…GGLNQYNCAP (97 aa)) are required for interaction with RUNX2. Polar residues predominate over residues 392-401 (PGSMMQQTPC). Lys-420 carries the post-translational modification N6-acetyllysine. The Required for interaction with SIRT1 motif lies at 459 to 463 (LKELL).

In terms of assembly, interacts with EP300 and CREBBP; the interactions acetylate FOXO1. Interacts with the 14-3-3 proteins, YWHAG and YWHAZ; the interactions require insulin-stimulated phosphorylation on Thr-24, promote nuclear exit and loss of transcriptional activity. Interacts with SKP2; the interaction ubiquitinates FOXO1 leading to its proteasomal degradation. Interacts with PMRT1; methylates FOXO1, prevents PKB/AKT1 phosphorylation and retains FOXO1 in the nucleus. Interacts (via an N-terminal domain) with FCOR; the interaction is direct, occurs in a forskolin-independent manner and prevents SIRT1 binding to FOXO1. Interacts (via the C-terminal half) with ATF4 (via its DNA-binding domain); the interaction occurs in osteoblasts, regulates glucose homeostasis via suppression of beta-cell proliferation and subsequent decrease in insulin production. Interacts with RUNX2; the interaction inhibits RUNX2 transcriptional activity and mediates the IGF1/insulin-dependent BGLAP expression in osteoblasts. Interacts with PPP2R1A; the interaction regulates the dephosphorylation of FOXO1 at Thr-24 and Ser-253 leading to its nuclear import. Binds to CDK1. Interacts with LRPPRC. Interacts with RUNX2; the interaction inhibits RUNX2 transcriptional activity and mediates the IGF1/insulin-dependent BGLAP expression in osteoblasts. Interacts with NLK. Interacts with SIRT1; the interaction results in the deacetylation of FOXO1 leading to activation of FOXO1-mediated transcription of genes involved in DNA repair and stress resistance. The interaction requires the presence of KRIT1 and is inhibited by FCOR. Interacts with SIRT2; the interaction is disrupted in response to oxidative stress or serum deprivation, leading to increased level of acetylated FOXO1, which promotes stress-induced autophagy by stimulating E1-like activating enzyme ATG7. Interacts (acetylated form) with ATG7; the interaction is increased in response to oxidative stress or serum deprivation and promotes the autophagic process leading to cell death. Interacts (acetylated form) with PPARG. Interacts with XBP1 isoform 2; this interaction is direct and leads to FOXO1 ubiquitination and degradation via the proteasome pathway. Interacts (via the Fork-head domain) with CEBPA; the interaction increases when FOXO1 is deacetylated. Interacts with WDFY2. Forms a complex with WDFY2 and AKT1. Interacts with CRY1. Interacts with PPIA/CYPA; the interaction promotes FOXO1 dephosphorylation, nuclear accumulation and transcriptional activity. Interacts with TOX4; FOXO1 is required for full induction of TOX4-dependent activity and the interaction is inhibited by insulin. Interacts (when phosphorylated on Ser-253) with STUB1/CHIP. Post-translationally, phosphorylation by NLK promotes nuclear export and inhibits the transcriptional activity. In response to growth factors, phosphorylation on Thr-24, Ser-253 and Ser-319 by PKB/AKT1 promotes nuclear export and inactivation of transactivational activity. Phosphorylation on Thr-24 is required for binding 14-3-3 proteins. Phosphorylation of Ser-253 decreases DNA-binding activity and promotes the phosphorylation of Thr-24 and Ser-316, permitting phosphorylation of Ser-319 and Ser-322, probably by CDK1, leading to nuclear exclusion and loss of function. Stress signals, such as response to oxygen or nitric oxide, attenuate the PKB/AKT1-mediated phosphorylation leading to nuclear retention. Phosphorylation of Ser-326 is independent of IGF1 and leads to reduced function. Dephosphorylated on Thr-24 and Ser-253 by PP2A in beta-cells under oxidative stress leading to nuclear retention. Phosphorylation of Ser-246 by CDK1 disrupts binding of 14-3-3 proteins leading to nuclear accumulation and has no effect on DNA-binding nor transcriptional activity. Phosphorylation by STK4/MST1 on Ser-209, upon oxidative stress, inhibits binding to 14-3-3 proteins and nuclear export. PPIA/CYPA promotes its dephosphorylation on Ser-253. In terms of processing, ubiquitinated by SKP2. Ubiquitinated, leading to proteasomal degradation. Ubiquitinated by STUB1/CHIP; when Ser-253 is phosphorylated. Methylation inhibits PKB/AKT1-mediated phosphorylation at Ser-253, promoting nuclear retention and increasing the transcriptional activity and cell death. Methylation increased by oxidative stress. Post-translationally, acetylation at Lys-259 and Lys-271 are necessary for autophagic cell death induction. Deacetylated by SIRT2 in response to oxidative stress or serum deprivation, thereby negatively regulating FOXO1-mediated autophagic cell death. Once in the nucleus, acetylated by CREBBP/EP300. Acetylation diminishes the interaction with target DNA and attenuates the transcriptional activity. It increases the phosphorylation at Ser-253, and is required for the transcriptional inhibition by FCOR. Deacetylation by SIRT1 results in reactivation of the transcriptional activity. Acetylation of FOXO1 diminishes its binding to PPARG in adipocytes. Deacetylated by SIRT2; deacetylation of FOXO1 directly increases its repressive binding to PPARG and inhibits adipocyte differentiation. Oxidative stress by hydrogen peroxide treatment appears to promote deacetylation and uncoupling of insulin-induced phosphorylation. By contrast, resveratrol acts independently of acetylation. Acetylated at Lys-420, promoting its localization to the nucleus and transcription factor activity. Deacetylation at Lys-420 by SIRT6, promotes its translocation into the cytoplasm, preventing its transcription factor activity. Deacetylation and subsequent inhibition by SIRT6 has different effects depending on cell types: it inhibits gluconeogenesis in hepatocytes, promotes glucose sensing in pancreatic beta-cells and regulates lipid catabolism in brown adipocytes. As to expression, expressed in liver, white and brown adipose tissues (at protein level).

The protein localises to the cytoplasm. It localises to the nucleus. In terms of biological role, transcription factor that is the main target of insulin signaling and regulates metabolic homeostasis in response to oxidative stress. Binds to the insulin response element (IRE) with consensus sequence 5'-TT[G/A]TTTTG-3' and the related Daf-16 family binding element (DBE) with consensus sequence 5'-TT[G/A]TTTAC-3'. Activity suppressed by insulin. Main regulator of redox balance and osteoblast numbers and controls bone mass. Orchestrates the endocrine function of the skeleton in regulating glucose metabolism. Also acts as a key regulator of chondrogenic commitment of skeletal progenitor cells in response to lipid availability: when lipids levels are low, translocates to the nucleus and promotes expression of SOX9, which induces chondrogenic commitment and suppresses fatty acid oxidation. Acts synergistically with ATF4 to suppress osteocalcin/BGLAP activity, increasing glucose levels and triggering glucose intolerance and insulin insensitivity. Also suppresses the transcriptional activity of RUNX2, an upstream activator of osteocalcin/BGLAP. Acts as an inhibitor of glucose sensing in pancreatic beta cells by acting as a transcription repressor and suppressing expression of PDX1. In hepatocytes, promotes gluconeogenesis by acting together with PPARGC1A and CEBPA to activate the expression of genes such as IGFBP1, G6PC1 and PCK1. Also promotes gluconeogenesis by directly promoting expression of PPARGC1A and G6PC1. Important regulator of cell death acting downstream of CDK1, PKB/AKT1 and STK4/MST1. Promotes neural cell death. Mediates insulin action on adipose tissue. Regulates the expression of adipogenic genes such as PPARG during preadipocyte differentiation and, adipocyte size and adipose tissue-specific gene expression in response to excessive calorie intake. Regulates the transcriptional activity of GADD45A and repair of nitric oxide-damaged DNA in beta-cells. Required for the autophagic cell death induction in response to starvation or oxidative stress in a transcription-independent manner. Mediates the function of MLIP in cardiomyocytes hypertrophy and cardiac remodeling. Positive regulator of apoptosis in cardiac smooth muscle cells as a result of its transcriptional activation of pro-apoptotic genes. Regulates endothelial cell (EC) viability and apoptosis in a PPIA/CYPA-dependent manner via transcription of CCL2 and BCL2L11 which are involved in EC chemotaxis and apoptosis. In Mus musculus (Mouse), this protein is Forkhead box protein O1 (Foxo1).